The primary structure comprises 104 residues: QPKSTPTLTMFPPSPEELQENKATLVCLISNFSPSGVTVAWKANGTPITQGVDTSNPTKEDNKYMASSFLHLTSDQWRSHNSFTCQVTHEGDTVEKSLSPAECL.

Residues 6–99 (PTLTMFPPSP…EGDTVEKSLS (94 aa)) form the Ig-like domain. Residues Cys-27 and Cys-85 are joined by a disulfide bond.

The sequence is that of Ig lambda-3 chain C region (Iglc3) from Mus musculus (Mouse).